The chain runs to 152 residues: Lipoprotein signal peptidase (152 aa).

Helical transmembrane passes span 5–25, 61–81, and 84–104; these read LFVLSLILLVALDQLSKFWIV, WFFVVITVLVIGYAIYYLATH, and LNIWKQLALLLIISGGIGNFI. Catalysis depends on residues Asp114 and Asp130. A helical transmembrane segment spans residues 125–145; that stretch reads IFNVADSYLTVGVILLVICLW.

The protein belongs to the peptidase A8 family.

It is found in the cell membrane. The enzyme catalyses Release of signal peptides from bacterial membrane prolipoproteins. Hydrolyzes -Xaa-Yaa-Zaa-|-(S,diacylglyceryl)Cys-, in which Xaa is hydrophobic (preferably Leu), and Yaa (Ala or Ser) and Zaa (Gly or Ala) have small, neutral side chains.. It participates in protein modification; lipoprotein biosynthesis (signal peptide cleavage). This protein specifically catalyzes the removal of signal peptides from prolipoproteins. This Streptococcus pyogenes serotype M3 (strain ATCC BAA-595 / MGAS315) protein is Lipoprotein signal peptidase.